We begin with the raw amino-acid sequence, 55 residues long: Hydrophobic protein LTI6B (55 aa).

2 helical membrane passes run 8-28 (IDIL…FGCG) and 31-51 (FWIC…YAIY).

The protein belongs to the UPF0057 (PMP3) family.

The protein resides in the membrane. In terms of biological role, plays a role in the regulation of membrane potential. Could mediate a proton leak. This Oryza sativa subsp. indica (Rice) protein is Hydrophobic protein LTI6B (LTI6B).